The following is a 388-amino-acid chain: Succinate--CoA ligase [ADP-forming] subunit beta (388 aa).

One can recognise an ATP-grasp domain in the interval 9–244; the sequence is KQLFAEFGLP…PSQEDKREAH (236 aa). ATP-binding positions include K46, 53-55, E99, S102, and E107; that span reads GRG. 2 residues coordinate Mg(2+): N199 and D213. Substrate contacts are provided by residues N264 and 321–323; that span reads GIV.

The protein belongs to the succinate/malate CoA ligase beta subunit family. Heterotetramer of two alpha and two beta subunits. The cofactor is Mg(2+).

It carries out the reaction succinate + ATP + CoA = succinyl-CoA + ADP + phosphate. It catalyses the reaction GTP + succinate + CoA = succinyl-CoA + GDP + phosphate. The protein operates within carbohydrate metabolism; tricarboxylic acid cycle; succinate from succinyl-CoA (ligase route): step 1/1. Its function is as follows. Succinyl-CoA synthetase functions in the citric acid cycle (TCA), coupling the hydrolysis of succinyl-CoA to the synthesis of either ATP or GTP and thus represents the only step of substrate-level phosphorylation in the TCA. The beta subunit provides nucleotide specificity of the enzyme and binds the substrate succinate, while the binding sites for coenzyme A and phosphate are found in the alpha subunit. In Vibrio vulnificus (strain YJ016), this protein is Succinate--CoA ligase [ADP-forming] subunit beta.